The sequence spans 85 residues: Small ribosomal subunit protein bS20 (85 aa).

Belongs to the bacterial ribosomal protein bS20 family.

Binds directly to 16S ribosomal RNA. In Borrelia hermsii (strain HS1 / DAH), this protein is Small ribosomal subunit protein bS20.